The primary structure comprises 1456 residues: ABC transporter G family member 44 (1456 aa).

One can recognise an ABC transporter 1 domain in the interval 169–442 (ANLLHVVPNK…FESMGFKCPD (274 aa)). Residue 202–209 (GPPGSGKT) coordinates ATP. One can recognise an ABC transmembrane type-2 1 domain in the interval 520–733 (ELLRTCIARE…AMNAIAVNEF (214 aa)). A run of 6 helical transmembrane segments spans residues 538–558 (FVYR…MTLF), 571–591 (GIVY…NGFS), 626–646 (IPIS…VIGF), 658–678 (LLLL…AALG), 682–702 (VVAN…SGFI), and 768–788 (IGVG…TIAL). Residues 812–844 (NITGETINDPRNSASSGQTTNTRRNAAPGEASE) form a disordered region. Positions 814 to 835 (TGETINDPRNSASSGQTTNTRR) are enriched in polar residues. Positions 858 to 1110 (VAFNNIRYSV…DLIEYFEGVE (253 aa)) constitute an ABC transporter 2 domain. Position 903–910 (903–910 (GVSGAGKT)) interacts with ATP. An ABC transmembrane type-2 2 domain is found at 1183 to 1397 (TQCMACLWKQ…TLYGLVASQF (215 aa)). The next 7 helical transmembrane spans lie at 1202–1222 (YTVV…TIFW), 1242–1262 (YAAV…VVAV), 1290–1310 (LPYV…MIGF), 1317–1337 (FFWY…YGML), 1347–1367 (IASI…GFVI), 1378–1398 (WYSW…SQFG), and 1425–1445 (FLGV…VSFS).

Belongs to the ABC transporter superfamily. ABCG family. PDR (TC 3.A.1.205) subfamily.

The protein localises to the membrane. Functionally, may be a general defense protein. This Oryza sativa subsp. japonica (Rice) protein is ABC transporter G family member 44.